Reading from the N-terminus, the 128-residue chain is Protein SOB FIVE-LIKE 3 (128 aa).

Disordered stretches follow at residues methionine 1–glutamate 26 and lysine 54–lysine 128. Polar residues predominate over residues serine 8–serine 18. Residues serine 11–tyrosine 16 carry the SOFL-A motif. An SOFL-B motif is present at residues serine 59–proline 68. Residues arginine 80–asparagine 104 are compositionally biased toward basic and acidic residues. Residues arginine 111 to serine 118 carry the Nuclear localization signal motif.

It belongs to the SOFL plant protein family. As to expression, expressed in seedlings, roots, flowers and siliques.

It is found in the cytoplasm. Its subcellular location is the nucleus. Functionally, involved in cytokinin-mediated development. The polypeptide is Protein SOB FIVE-LIKE 3 (Arabidopsis thaliana (Mouse-ear cress)).